A 201-amino-acid polypeptide reads, in one-letter code: Large ribosomal subunit protein uL4 (201 aa).

The tract at residues 44 to 71 is disordered; the sequence is RAQKTRAEVSGSGKKPWRQKGTGRARSG.

The protein belongs to the universal ribosomal protein uL4 family. As to quaternary structure, part of the 50S ribosomal subunit.

In terms of biological role, one of the primary rRNA binding proteins, this protein initially binds near the 5'-end of the 23S rRNA. It is important during the early stages of 50S assembly. It makes multiple contacts with different domains of the 23S rRNA in the assembled 50S subunit and ribosome. Functionally, forms part of the polypeptide exit tunnel. This chain is Large ribosomal subunit protein uL4, found in Photorhabdus laumondii subsp. laumondii (strain DSM 15139 / CIP 105565 / TT01) (Photorhabdus luminescens subsp. laumondii).